The following is a 248-amino-acid chain: Probable transcriptional regulatory protein Avi_3631 (248 aa).

This sequence belongs to the TACO1 family.

The protein localises to the cytoplasm. This Allorhizobium ampelinum (strain ATCC BAA-846 / DSM 112012 / S4) (Agrobacterium vitis (strain S4)) protein is Probable transcriptional regulatory protein Avi_3631.